A 216-amino-acid polypeptide reads, in one-letter code: Ras-related protein RABA1a (216 aa).

A GTP-binding site is contributed by 20–27 (GDSGVGKS). The short motif at 42–50 (SKSTIGVEF) is the Effector region element. GTP contacts are provided by residues 68-72 (DTAGQ), 126-129 (NKCD), and 156-157 (SA). 2 S-geranylgeranyl cysteine lipidation sites follow: Cys-213 and Cys-214.

The protein belongs to the small GTPase superfamily. Rab family.

It is found in the cell membrane. Its function is as follows. Involved in auxin-mediated response. May be involved in vesicle trafficking of components involved in polar auxin transport. Binds GTP and GDP and possesses intrinsic GTPase activity. In Arabidopsis thaliana (Mouse-ear cress), this protein is Ras-related protein RABA1a (RABA1A).